Consider the following 217-residue polypeptide: tRNA (guanine-N(7)-)-methyltransferase (217 aa).

4 residues coordinate S-adenosyl-L-methionine: Glu43, Asp68, Asn101, and Asn123. Residue Lys127 coordinates substrate. An interaction with RNA region spans residues 129–134 (KHNKRR). Residues Asp159 and 196–199 (TEYE) each bind substrate.

This sequence belongs to the class I-like SAM-binding methyltransferase superfamily. TrmB family.

The catalysed reaction is guanosine(46) in tRNA + S-adenosyl-L-methionine = N(7)-methylguanosine(46) in tRNA + S-adenosyl-L-homocysteine. Its pathway is tRNA modification; N(7)-methylguanine-tRNA biosynthesis. Functionally, catalyzes the formation of N(7)-methylguanine at position 46 (m7G46) in tRNA. This is tRNA (guanine-N(7)-)-methyltransferase from Clostridium botulinum (strain Okra / Type B1).